Consider the following 293-residue polypeptide: Diaminopimelate epimerase (293 aa).

The substrate site is built by asparagine 17, glutamine 47, and asparagine 67. Cysteine 76 (proton donor) is an active-site residue. Substrate-binding positions include 77–78, asparagine 164, asparagine 197, and 215–216; these read GN and ER. Cysteine 224 acts as the Proton acceptor in catalysis. 225-226 provides a ligand contact to substrate; sequence GS.

The protein belongs to the diaminopimelate epimerase family. As to quaternary structure, homodimer.

It localises to the cytoplasm. It carries out the reaction (2S,6S)-2,6-diaminopimelate = meso-2,6-diaminopimelate. The protein operates within amino-acid biosynthesis; L-lysine biosynthesis via DAP pathway; DL-2,6-diaminopimelate from LL-2,6-diaminopimelate: step 1/1. In terms of biological role, catalyzes the stereoinversion of LL-2,6-diaminopimelate (L,L-DAP) to meso-diaminopimelate (meso-DAP), a precursor of L-lysine and an essential component of the bacterial peptidoglycan. The chain is Diaminopimelate epimerase from Rhodopseudomonas palustris (strain ATCC BAA-98 / CGA009).